Here is a 102-residue protein sequence, read N- to C-terminus: UPF0045 protein Mb1933 (102 aa).

This sequence belongs to the UPF0045 family.

This Mycobacterium bovis (strain ATCC BAA-935 / AF2122/97) protein is UPF0045 protein Mb1933.